A 298-amino-acid polypeptide reads, in one-letter code: Small ribosomal subunit protein uS3 (298 aa).

Residues valine 39–arginine 107 enclose the KH type-2 domain. The disordered stretch occupies residues proline 214–glutamate 298. Basic and acidic residues predominate over residues alanine 219–alanine 245. Over residues lysine 277–glutamate 298 the composition is skewed to low complexity.

This sequence belongs to the universal ribosomal protein uS3 family. In terms of assembly, part of the 30S ribosomal subunit. Forms a tight complex with proteins S10 and S14.

In terms of biological role, binds the lower part of the 30S subunit head. Binds mRNA in the 70S ribosome, positioning it for translation. The chain is Small ribosomal subunit protein uS3 from Albidiferax ferrireducens (strain ATCC BAA-621 / DSM 15236 / T118) (Rhodoferax ferrireducens).